The primary structure comprises 551 residues: Dihydroxy-acid dehydratase (551 aa).

A Mg(2+)-binding site is contributed by Asp78. Residue Cys119 participates in [2Fe-2S] cluster binding. 2 residues coordinate Mg(2+): Asp120 and Lys121. At Lys121 the chain carries N6-carboxylysine. Residue Cys191 coordinates [2Fe-2S] cluster. Glu442 is a Mg(2+) binding site. Ser468 acts as the Proton acceptor in catalysis.

This sequence belongs to the IlvD/Edd family. As to quaternary structure, homodimer. [2Fe-2S] cluster is required as a cofactor. The cofactor is Mg(2+).

It catalyses the reaction (2R)-2,3-dihydroxy-3-methylbutanoate = 3-methyl-2-oxobutanoate + H2O. The catalysed reaction is (2R,3R)-2,3-dihydroxy-3-methylpentanoate = (S)-3-methyl-2-oxopentanoate + H2O. It functions in the pathway amino-acid biosynthesis; L-isoleucine biosynthesis; L-isoleucine from 2-oxobutanoate: step 3/4. Its pathway is amino-acid biosynthesis; L-valine biosynthesis; L-valine from pyruvate: step 3/4. Its function is as follows. Functions in the biosynthesis of branched-chain amino acids. Catalyzes the dehydration of (2R,3R)-2,3-dihydroxy-3-methylpentanoate (2,3-dihydroxy-3-methylvalerate) into 2-oxo-3-methylpentanoate (2-oxo-3-methylvalerate) and of (2R)-2,3-dihydroxy-3-methylbutanoate (2,3-dihydroxyisovalerate) into 2-oxo-3-methylbutanoate (2-oxoisovalerate), the penultimate precursor to L-isoleucine and L-valine, respectively. This is Dihydroxy-acid dehydratase from Halothermothrix orenii (strain H 168 / OCM 544 / DSM 9562).